The sequence spans 41 residues: Large ribosomal subunit protein bL36 (41 aa).

It belongs to the bacterial ribosomal protein bL36 family.

The protein is Large ribosomal subunit protein bL36 of Granulibacter bethesdensis (strain ATCC BAA-1260 / CGDNIH1).